The chain runs to 108 residues: Glutaredoxin-like protein YDR286C homolog (108 aa).

A disulfide bridge connects residues Cys-22 and Cys-25.

Belongs to the glutaredoxin family. YDR286C subfamily.

The protein is Glutaredoxin-like protein YDR286C homolog of Dictyostelium discoideum (Social amoeba).